Consider the following 603-residue polypeptide: MAMYTTMAILTLTSLIPPITATLINPNKKNLYPHYVKMTIASTFMISLFPTMMFMCTDQETIISNWHWTATQTLELSLSFKLDYFSMMFIPIALFVTWSIMEFSLWYMHSDPNINQFFKYLLIFLTTMLILVTANNLFQLFIGWEGVGIMSFLLIGWWHAREEANTAAIQAILYNRIGDIGFILALAWFLLHTNSWEPQQMILLNSNPNFLPLAGLLLAARGKSAQLGLHPWLPSAMEGPTPVSALLHSSTMVVAGVFLLIRFHPLTENNQLIQTLTLCLGAITTLFTAICALTQNDIKKIVAFSTSSQLGLMVVTIGINQPYLAFLHICTHAFFKAMLFMCSGSIIHNLNNEQDIRKMGGLFKTLPLTSTSLTIGSLALTGMPFLTGFYSKDLIIETANMSYTNAWALSTTLIATSLTSAYSTRMILLTLTNRPRFPTLTNINENNPTLLNPIKRLTIGSLLAGFLIINSIPPTSPSQTTIPLYLKLTALSITLLGFLTAFDLHLLTNKLKMKNPSHTFHFSNMLGFYPNTIHRTIPYASLTMSQNLASLLLDLAWLEKLMPKTISHHQISASVTISSQKGMIKLYSLSLLIPLSLTLLLIM.

A run of 16 helical transmembrane segments spans residues 4–24 (YTTM…ATLI), 36–56 (VKMT…MFMC), 87–107 (MMFI…SLWY), 114–134 (INQF…LVTA), 137–157 (LFQL…LIGW), 171–191 (AILY…WFLL), 200–220 (QMIL…LLAA), 241–261 (TPVS…FLLI), 272–292 (LIQT…AICA), 301–320 (IVAF…IGIN), 325–347 (AFLH…GSII), 366–386 (LPLT…MPFL), 407–429 (WALS…MILL), 457–477 (LTIG…PTSP), 482–502 (IPLY…LTAF), and 583–603 (MIKL…LLIM).

The protein belongs to the complex I subunit 5 family. As to quaternary structure, core subunit of respiratory chain NADH dehydrogenase (Complex I) which is composed of 45 different subunits.

Its subcellular location is the mitochondrion inner membrane. The enzyme catalyses a ubiquinone + NADH + 5 H(+)(in) = a ubiquinol + NAD(+) + 4 H(+)(out). Its function is as follows. Core subunit of the mitochondrial membrane respiratory chain NADH dehydrogenase (Complex I) which catalyzes electron transfer from NADH through the respiratory chain, using ubiquinone as an electron acceptor. Essential for the catalytic activity and assembly of complex I. The polypeptide is NADH-ubiquinone oxidoreductase chain 5 (MT-ND5) (Hylobates lar (Lar gibbon)).